The sequence spans 697 residues: MNINLDTAKDTLCKNILIYGYCKYENKGCAFSHNRQQPAQQQQATNTSNNSTSVITPNSANSTASSADLSSKKKFNLNTPSFQPSVSNLSNKFSTLSPKLKEIPVFKPENGVSEPDTVDSPTTQRPFTSKRFNVSTPSFTPTNFDFANNSNADGNRGGASTPIGISSAPLVQNQQQQQQQQQQQQKQPLAVPSPLASGAQPPTMQHRILSMGVSQSSPSTNPYFANNLDMSAPTPGSETPGPVLPGSAGAAAAAANQPMYPLQYHLYAPAPPPRLTIPLQPYETNSQAMFIPNDLREYLHKKNEASLQSLSHSNLPEHVNQYHSLVPIDKSYEPVSKLWLGKNSLIFKCLDNIDGNLYVMRKIEPCNEIINEKPFKTIKRWKSIKNANIVGLQDAFTTMAFNGNQSGNTSLCIIYDYYPNSISLLEHHKKGLRVEPVNEALLWNYLIQLINAIMAIHEKGLSASSTIDLSKIIVTNKNRIKLSSVGISDILEFKDDETNQDIKIRQLQDIQKVGKVLMELAILLLPVNMRQSNNIYNSLKASTNLSEEIINNLQELNDLDTASGEFDLNEFSQRLTPKMFNIIDSLQNSSDFIEGQLTSELENARLFRLMTKLNYLIHDNSNSENDKIIKLFLNYVYNCYDSNNKKVINLNKVLINLNKLDCGIDEKILLVNNDECIIISYKELKEIIDTKFRLMRE.

The segment at 7–36 (TAKDTLCKNILIYGYCKYENKGCAFSHNRQ) adopts a C3H1-type zinc-finger fold. The segment at 40 to 67 (QQQQATNTSNNSTSVITPNSANSTASSA) is disordered. Short sequence motifs (PABPC-interacting motif-2 (PAM-2)) lie at residues 69-89 (LSSK…VSNL) and 106-126 (FKPE…TQRP). The disordered stretch occupies residues 106–240 (FKPENGVSEP…SAPTPGSETP (135 aa)). The span at 119–153 (DSPTTQRPFTSKRFNVSTPSFTPTNFDFANNSNAD) shows a compositional bias: polar residues. Low complexity predominate over residues 172–187 (QNQQQQQQQQQQQQKQ). The span at 212–224 (GVSQSSPSTNPYF) shows a compositional bias: polar residues. A pseudokinase domain region spans residues 308-576 (QSLSHSNLPE…DLNEFSQRLT (269 aa)). ATP-binding positions include Arg361, 416–423 (DYYPNSIS), and 470–471 (SK). Residues 577–615 (PKMFNIIDSLQNSSDFIEGQLTSELENARLFRLMTKLNY) are a coiled coil. A knob domain region spans residues 616–697 (LIHDNSNSEN…IDTKFRLMRE (82 aa)).

The protein belongs to the protein kinase superfamily. PAN3 family. As to quaternary structure, homodimer. Forms a heterotrimer with a catalytic subunit PAN2 to form the poly(A)-nuclease (PAN) deadenylation complex. Interacts (via PAM-2 motif) with poly(A)-binding protein PAB1 (via PABC domain), conferring substrate specificity of the enzyme complex.

Its subcellular location is the cytoplasm. Its function is as follows. Regulatory subunit of the poly(A)-nuclease (PAN) deadenylation complex, one of two cytoplasmic mRNA deadenylases involved in mRNA turnover. PAN specifically shortens poly(A) tails of RNA and the activity is stimulated by poly(A)-binding protein PAB1. PAN deadenylation is followed by rapid degradation of the shortened mRNA tails by the CCR4-NOT complex. Deadenylated mRNAs are then degraded by two alternative mechanisms, namely exosome-mediated 3'-5' exonucleolytic degradation, or deadenylation-dependent mRNA decaping and subsequent 5'-3' exonucleolytic degradation by XRN1. May also be involved in post-transcriptional maturation of mRNA poly(A) tails. PAN3 acts as a positive regulator for PAN activity, recruiting the catalytic subunit PAN2 to mRNA via its interaction with RNA and with PAB1. The chain is PAN2-PAN3 deadenylation complex subunit PAN3 from Candida albicans (strain SC5314 / ATCC MYA-2876) (Yeast).